The primary structure comprises 402 residues: Thyroid hormone receptor alpha (402 aa).

Residues 1–22 are disordered; the sequence is MEQKPSTLDPLSEPEDTRWLDG. The segment at 1-50 is modulating; sequence MEQKPSTLDPLSEPEDTRWLDGKRKRKSSQCLVKSSMSGYIPSYLDKDEQ. Serine 12 carries the post-translational modification Phosphoserine; by CK2. Phosphoserine is present on serine 28. Residues cysteine 51, cysteine 54, cysteine 68, cysteine 71, cysteine 89, cysteine 95, cysteine 105, and cysteine 108 each contribute to the Zn(2+) site. 2 NR C4-type zinc fingers span residues 51-71 and 89-113; these read CVVC…CEGC and CKYD…FKKC. Positions 51 to 125 form a DNA-binding region, nuclear receptor; sequence CVVCGDKATG…VGMAMDLVLD (75 aa). Residues 161-402 enclose the NR LBD domain; sequence EEWELIHVVT…ELFPPLFLEV (242 aa). Positions 226 and 275 each coordinate 3,3',5-triiodo-L-thyronine.

Belongs to the nuclear hormone receptor family. NR1 subfamily. As to quaternary structure, probably interacts with SFPQ.

It localises to the nucleus. Functionally, nuclear hormone receptor that can act as a repressor or activator of transcription. High affinity receptor for thyroid hormones, including triiodothyronine and thyroxine. This is Thyroid hormone receptor alpha (THRA) from Aptenodytes patagonicus (King penguin).